The following is a 645-amino-acid chain: 1-deoxy-D-xylulose-5-phosphate synthase 2 (645 aa).

Thiamine diphosphate contacts are provided by residues histidine 79 and 120–122; that span reads GHS. Aspartate 151 is a binding site for Mg(2+). Thiamine diphosphate-binding positions include 152–153, asparagine 180, tyrosine 291, and glutamate 373; that span reads GS. Asparagine 180 is a Mg(2+) binding site.

This sequence belongs to the transketolase family. DXPS subfamily. In terms of assembly, homodimer. The cofactor is Mg(2+). Requires thiamine diphosphate as cofactor.

It carries out the reaction D-glyceraldehyde 3-phosphate + pyruvate + H(+) = 1-deoxy-D-xylulose 5-phosphate + CO2. It participates in metabolic intermediate biosynthesis; 1-deoxy-D-xylulose 5-phosphate biosynthesis; 1-deoxy-D-xylulose 5-phosphate from D-glyceraldehyde 3-phosphate and pyruvate: step 1/1. Its function is as follows. Catalyzes the acyloin condensation reaction between C atoms 2 and 3 of pyruvate and glyceraldehyde 3-phosphate to yield 1-deoxy-D-xylulose-5-phosphate (DXP). This is 1-deoxy-D-xylulose-5-phosphate synthase 2 from Rhodospirillum rubrum (strain ATCC 11170 / ATH 1.1.1 / DSM 467 / LMG 4362 / NCIMB 8255 / S1).